The sequence spans 510 residues: NAD(P)H-quinone oxidoreductase subunit 2 B, chloroplastic (510 aa).

13 helical membrane passes run 24-44 (LLLFDGSLIFPECILIFGLIL), 57-77 (LPWFYFISSTSLVMSITALLF), 99-119 (IFQFLILLCSTLCIPLSVEYI), 124-144 (MAITEFLLFVLTATLGGMFLC), 149-169 (LITIFVAPECFSFCSYLLSGY), 183-203 (YLLMGGASSSILVHAFSWLYG), 227-247 (PGISIALLFITVGIGFKLSPA), 295-315 (WHLLLEILAILSMILGNIIAI), 323-343 (MLAYSSIGQIGYVIIGIIVGD), 354-374 (YMLFYISMNLGTFACIVLFGL), 395-415 (ALSLALCLLSLGGLPPLAGFF), 428-448 (GLYSLVLIGLLTSVVSIYYYL), and 484-504 (MIVCVIASTIPGISMNPIIAI).

It belongs to the complex I subunit 2 family. NDH is composed of at least 16 different subunits, 5 of which are encoded in the nucleus.

It localises to the plastid. Its subcellular location is the chloroplast thylakoid membrane. It catalyses the reaction a plastoquinone + NADH + (n+1) H(+)(in) = a plastoquinol + NAD(+) + n H(+)(out). The enzyme catalyses a plastoquinone + NADPH + (n+1) H(+)(in) = a plastoquinol + NADP(+) + n H(+)(out). Functionally, NDH shuttles electrons from NAD(P)H:plastoquinone, via FMN and iron-sulfur (Fe-S) centers, to quinones in the photosynthetic chain and possibly in a chloroplast respiratory chain. The immediate electron acceptor for the enzyme in this species is believed to be plastoquinone. Couples the redox reaction to proton translocation, and thus conserves the redox energy in a proton gradient. The chain is NAD(P)H-quinone oxidoreductase subunit 2 B, chloroplastic from Jasminum nudiflorum (Winter jasmine).